Here is a 361-residue protein sequence, read N- to C-terminus: 5-formaminoimidazole-4-carboxamide-1-(beta)-D-ribofuranosyl 5'-monophosphate synthetase (361 aa).

Residues H27 and S94 each coordinate 5-amino-1-(5-phospho-beta-D-ribosyl)imidazole-4-carboxamide. One can recognise an ATP-grasp domain in the interval 116–348 (RAILRWEAER…MGQRIAKEIK (233 aa)). Residues 146 to 208 (PDEI…ANYC) and E230 each bind ATP. N258 is a 5-amino-1-(5-phospho-beta-D-ribosyl)imidazole-4-carboxamide binding site. Q297 and E310 together coordinate Mg(2+).

Belongs to the phosphohexose mutase family. The cofactor is Mg(2+). Mn(2+) is required as a cofactor.

It carries out the reaction 5-amino-1-(5-phospho-beta-D-ribosyl)imidazole-4-carboxamide + formate + ATP = 5-formamido-1-(5-phospho-D-ribosyl)imidazole-4-carboxamide + ADP + phosphate. Its pathway is purine metabolism; IMP biosynthesis via de novo pathway; 5-formamido-1-(5-phospho-D-ribosyl)imidazole-4-carboxamide from 5-amino-1-(5-phospho-D-ribosyl)imidazole-4-carboxamide (formate route): step 1/1. Its function is as follows. Catalyzes the ATP- and formate-dependent formylation of 5-aminoimidazole-4-carboxamide-1-beta-d-ribofuranosyl 5'-monophosphate (AICAR) to 5-formaminoimidazole-4-carboxamide-1-beta-d-ribofuranosyl 5'-monophosphate (FAICAR) in the absence of folates. The protein is 5-formaminoimidazole-4-carboxamide-1-(beta)-D-ribofuranosyl 5'-monophosphate synthetase of Methanococcus vannielii (strain ATCC 35089 / DSM 1224 / JCM 13029 / OCM 148 / SB).